We begin with the raw amino-acid sequence, 189 residues long: DAN domain family member 5 (189 aa).

Positions M1–G22 are cleaved as a signal peptide. A glycan (N-linked (GlcNAc...) asparagine) is linked at N38. 4 disulfides stabilise this stretch: C101–C148, C115–C162, C125–C183, and C129–C185. In terms of domain architecture, CTCK spans C101–S186.

It belongs to the DAN family. As to expression, expressed in the retina, in inner segments of photoreceptors, at or close to the outer plexiform layer and in the ganglion cell layer (at protein level).

Its subcellular location is the secreted. Antagonist of the extracellular signaling protein NODAL, which is required for correct left-right patterning during embryonic development. Antagonist of BMP and TGF-beta signaling. Independently of its role in left-right axis establishment, plays a role during heart development, possibly through the regulation of TGF-beta/Nodal signaling pathway. Displays anti-angiogenic activity by inhibiting endothelial sprouting, migration, and proliferation. Once internalized by endothelial cells, may alter their redox and glycolytic balance. The polypeptide is DAN domain family member 5 (DAND5) (Homo sapiens (Human)).